A 100-amino-acid polypeptide reads, in one-letter code: NADH-quinone oxidoreductase subunit K (100 aa).

Transmembrane regions (helical) follow at residues 4–24 (LTHG…GLVI), 28–48 (LLFM…AFVV), and 60–80 (IMYI…LALL).

Belongs to the complex I subunit 4L family. In terms of assembly, NDH-1 is composed of 13 different subunits. Subunits NuoA, H, J, K, L, M, N constitute the membrane sector of the complex.

It is found in the cell inner membrane. It carries out the reaction a quinone + NADH + 5 H(+)(in) = a quinol + NAD(+) + 4 H(+)(out). Its function is as follows. NDH-1 shuttles electrons from NADH, via FMN and iron-sulfur (Fe-S) centers, to quinones in the respiratory chain. The immediate electron acceptor for the enzyme in this species is believed to be ubiquinone. Couples the redox reaction to proton translocation (for every two electrons transferred, four hydrogen ions are translocated across the cytoplasmic membrane), and thus conserves the redox energy in a proton gradient. In Klebsiella pneumoniae (strain 342), this protein is NADH-quinone oxidoreductase subunit K.